We begin with the raw amino-acid sequence, 377 residues long: D-alanine--D-alanine ligase (377 aa).

The ATP-grasp domain occupies 137–346 (KELMTVNGIR…RSQQAEKLIQ (210 aa)). 167–222 (SKQLGEVVFVKAANQGSSVGVSRVTNAEEYENALRDSFQYDEKLLVEKAVESPTEL) lines the ATP pocket. 3 residues coordinate Mg(2+): D300, E313, and N315.

The protein belongs to the D-alanine--D-alanine ligase family. Mg(2+) is required as a cofactor. It depends on Mn(2+) as a cofactor.

The protein resides in the cytoplasm. It carries out the reaction 2 D-alanine + ATP = D-alanyl-D-alanine + ADP + phosphate + H(+). Its pathway is cell wall biogenesis; peptidoglycan biosynthesis. Cell wall formation. The chain is D-alanine--D-alanine ligase from Oenococcus oeni (strain ATCC BAA-331 / PSU-1).